The primary structure comprises 375 residues: Serpin B5 (375 aa).

N-linked (GlcNAc...) asparagine glycosylation is found at asparagine 99, asparagine 133, asparagine 188, and asparagine 361.

Belongs to the serpin family. Ov-serpin subfamily. Interacts with IRF6. Normal mammary epithelial cells.

It is found in the secreted. Its subcellular location is the extracellular space. Its function is as follows. Tumor suppressor. It blocks the growth, invasion, and metastatic properties of mammary tumors. As it does not undergo the S (stressed) to R (relaxed) conformational transition characteristic of active serpins, it exhibits no serine protease inhibitory activity. The sequence is that of Serpin B5 (SERPINB5) from Homo sapiens (Human).